The sequence spans 505 residues: Trans-cinnamate 4-monooxygenase (505 aa).

Residues 3-23 (LLLLEKTLLGLFLAAVVAIVV) traverse the membrane as a helical segment. (E)-cinnamate-binding positions include 213 to 218 (RSRLAQ) and Ala-306. Cys-447 contacts heme.

The protein belongs to the cytochrome P450 family. Requires heme as cofactor.

Its subcellular location is the membrane. The enzyme catalyses (E)-cinnamate + reduced [NADPH--hemoprotein reductase] + O2 = (E)-4-coumarate + oxidized [NADPH--hemoprotein reductase] + H2O + H(+). The protein operates within phenylpropanoid metabolism; trans-4-coumarate biosynthesis; trans-4-coumarate from trans-cinnamate: step 1/1. In terms of biological role, catalyzes the first oxidative step of the phenylpropanoid pathway in higher plants by transforming trans-cinnamate into p-coumarate. The compounds formed by this pathway are essential components for lignification, pollination, and defense against ultraviolet light, predators and pathogens. This Vigna radiata var. radiata (Mung bean) protein is Trans-cinnamate 4-monooxygenase (CYP73A2).